The sequence spans 102 residues: Phosphoribosyl-ATP pyrophosphatase (102 aa).

The protein belongs to the PRA-PH family.

It is found in the cytoplasm. It catalyses the reaction 1-(5-phospho-beta-D-ribosyl)-ATP + H2O = 1-(5-phospho-beta-D-ribosyl)-5'-AMP + diphosphate + H(+). It functions in the pathway amino-acid biosynthesis; L-histidine biosynthesis; L-histidine from 5-phospho-alpha-D-ribose 1-diphosphate: step 2/9. In Ignicoccus hospitalis (strain KIN4/I / DSM 18386 / JCM 14125), this protein is Phosphoribosyl-ATP pyrophosphatase.